A 936-amino-acid polypeptide reads, in one-letter code: MTLLDTEQALLAIHTVLQLKLQQRRTREELENQGIMPPLKSPAAFHEQRRSLERARTEDYLKRKIRSRPERAELVRMHILEETSAEPSLQAKQIKLKRARLADDLNEKISQRPGPMELVVKNILPVETSLKEVIIDVDYPEVVDNSSFDEDSSDALSPEQPASQESQGSIPSPIENRPSETTQIPALSPSHAFSCVQFGTDAFNQDSLQSTAITISNGLTASICKSLPALVKQSQPKPSFEKSQRIKKPKEPKPKVKKLKYHQYIPPDQKQKGTPAMDSSYAKLLQQQQLFLQLQIINQQQHQHYNYQTILPAPPKPLPDQQNTNSSSTTTVRSMSTVAPSTLATPTITRQNSNVAVGGRTGPLPHNLDEMKVAELKLELKHRGLPVSGTKIDLIERLKASQDPSTATAASAKPTPVQQAKPPEVVPIVSSSCLTTREPIKLCSTSSTPPGSPCPSEVSVVSMDEVSMISDALGETVACPVTQQVQQNPAAEKSPPDARDKDLMLREKDRQIEELTQRLKQKQELVERLRQQLEQEKRTPQHSTDDQQALILAVKQEPLPLTVDSINKKASSIVKQELNTAIICQQEPQLLIGPVSSGIEGKVDNSAGTKLVFTLTNPSSQLPEENRQIVLQKVPTPPSSLHPNNSLPKQEVLLSCCALQNQKPALQLVPGTVLSLSSSNLQPMLNMNGFQKWHGEALDSLQKQLVHNESPATPPQQPEPEPPPHSIFLTHSSPQWSKNPPGYDEAMKQQPNSCEDGRPGCLQAVDFFDVLIKNLDIPSEFKDYLVPCLKQTSPSHQAAQMVPQVEMAPPPSPIHSALGRLEDFLESSTGTPLLRGHQDGPSSMPLIDDLHSQMLSSLAILDHPPSPMDTSDLHFSPIGNSLGLDISEPPLDGMDWLELSEPPAMNLTPLSTFTPSVFSTDFLDSHDLHLHWDSCL.

3 RPEL repeats span residues 15-40 (TVLQ…PPLK), 59-84 (DYLK…EETS), and 103-128 (DDLN…PVET). Residues 62–100 (KRKIRSRPERAELVRMHILEETSAEPSLQAKQIKLKRAR) carry the Bipartite Nuclear localization signal motif. 3 disordered regions span residues 146-185 (SSFD…TQIP), 234-258 (SQPK…KVKK), and 401-422 (SQDP…QAKP). A compositionally biased stretch (polar residues) spans 160 to 170 (QPASQESQGSI). Positions 239-254 (SFEKSQRIKKPKEPKP) are enriched in basic and acidic residues. An SAP domain is found at 368–402 (LDEMKVAELKLELKHRGLPVSGTKIDLIERLKASQ). The segment covering 404–416 (PSTATAASAKPTP) has biased composition (low complexity). A coiled-coil region spans residues 497-542 (DARDKDLMLREKDRQIEELTQRLKQKQELVERLRQQLEQEKRTPQH). The disordered stretch occupies residues 707 to 755 (HNESPATPPQQPEPEPPPHSIFLTHSSPQWSKNPPGYDEAMKQQPNSCE). Residues 712-725 (ATPPQQPEPEPPPH) show a composition bias toward pro residues. A compositionally biased stretch (polar residues) spans 729-738 (LTHSSPQWSK).

As to quaternary structure, interacts with srf, forming the srf-mrtfa nuclear complex which binds the 5'-CArG-3' consensus motif (CArG box) on DNA via srf. Interacts (via RPEL repeats) with globular actin (G-actin), thereby regulating its subcellular location and activity of the complex formed with srf.

The protein localises to the cytoplasm. The protein resides in the nucleus. In terms of biological role, transcription coactivator that associates with the serum response factor (srf) transcription factor to control expression of genes regulating the cytoskeleton during development, morphogenesis and cell migration. The srf-mrtfa complex activity responds to Rho GTPase-induced changes in cellular globular actin (G-actin) concentration, thereby coupling cytoskeletal gene expression to cytoskeletal dynamics. Mrtfa binds G-actin via its RPEL repeats, regulating activity of the mrtfa-srf complex. Activity is also regulated by filamentous actin (F-actin) in the nucleus. This Xenopus laevis (African clawed frog) protein is Myocardin-related transcription factor A (mrtfa).